A 458-amino-acid chain; its full sequence is Fasciclin-like arabinogalactan protein 17 (458 aa).

The signal sequence occupies residues 1–30 (MDRRIYGGSAVIHLFLFFSVLIFSAASALS). The FAS1 1 domain occupies 43–184 (NSNSVLVALL…GLIHGIERLL (142 aa)). N-linked (GlcNAc...) asparagine glycosylation occurs at Asn80. The segment at 207–262 (PEGAPEVDPRTNRLKKPAAPVPAGSPPALPIQSAMAPGPSLAPAPAPGPGGKQHHF) is disordered. A compositionally biased stretch (pro residues) spans 225 to 235 (APVPAGSPPAL). Residues 268–411 (VKDFIHTLLH…ISVQGIDGVL (144 aa)) enclose the FAS1 2 domain. Asn290 is a glycosylation site (N-linked (GlcNAc...) asparagine).

The protein belongs to the fasciclin-like AGP family.

It localises to the secreted. Functionally, may be a cell surface adhesion protein. The protein is Fasciclin-like arabinogalactan protein 17 (FLA17) of Arabidopsis thaliana (Mouse-ear cress).